Here is an 852-residue protein sequence, read N- to C-terminus: GPI ethanolamine phosphate transferase 2 (852 aa).

2 N-linked (GlcNAc...) asparagine glycosylation sites follow: Asn191 and Asn420. A run of 3 helical transmembrane segments spans residues 458–478 (LIRL…TFFP), 486–506 (FAPA…MMFA), and 516–536 (FWYW…AGHF). A glycan (N-linked (GlcNAc...) asparagine) is linked at Asn576. Transmembrane regions (helical) follow at residues 632–652 (LLYH…YSLY), 676–696 (TLTL…FLVF), 714–734 (TITS…SNAI), 750–770 (SVFI…IWWV), 787–807 (AHVT…MAAC), and 824–844 (YLYT…LGEI).

It belongs to the PIGG/PIGN/PIGO family. PIGG subfamily.

It is found in the endoplasmic reticulum membrane. It participates in glycolipid biosynthesis; glycosylphosphatidylinositol-anchor biosynthesis. In terms of biological role, ethanolamine phosphate transferase involved in glycosylphosphatidylinositol-anchor biosynthesis. Transfers ethanolamine phosphate to the GPI second mannose. This Aspergillus oryzae (strain ATCC 42149 / RIB 40) (Yellow koji mold) protein is GPI ethanolamine phosphate transferase 2 (las21).